The primary structure comprises 106 residues: Large ribosomal subunit protein uL23 (106 aa).

Belongs to the universal ribosomal protein uL23 family. Part of the 50S ribosomal subunit. Contacts protein L29, and trigger factor when it is bound to the ribosome.

Its function is as follows. One of the early assembly proteins it binds 23S rRNA. One of the proteins that surrounds the polypeptide exit tunnel on the outside of the ribosome. Forms the main docking site for trigger factor binding to the ribosome. This is Large ribosomal subunit protein uL23 from Acinetobacter baumannii (strain SDF).